Here is a 392-residue protein sequence, read N- to C-terminus: Heat-inducible transcription repressor HrcA (392 aa).

The protein belongs to the HrcA family.

Functionally, negative regulator of class I heat shock genes (grpE-dnaK-dnaJ and groELS operons). Prevents heat-shock induction of these operons. The polypeptide is Heat-inducible transcription repressor HrcA (Chlamydia trachomatis serovar A (strain ATCC VR-571B / DSM 19440 / HAR-13)).